The chain runs to 633 residues: Threonine--tRNA ligase (633 aa).

Residues 1–61 enclose the TGS domain; sequence MINITLPDGS…DHDASLRIIT (61 aa). The interval 243-534 is catalytic; that stretch reads DHRRIGKQQD…LIEHHAGQFP (292 aa). Residues C334, H385, and H511 each coordinate Zn(2+).

It belongs to the class-II aminoacyl-tRNA synthetase family. Homodimer. Requires Zn(2+) as cofactor.

It is found in the cytoplasm. It catalyses the reaction tRNA(Thr) + L-threonine + ATP = L-threonyl-tRNA(Thr) + AMP + diphosphate + H(+). Functionally, catalyzes the attachment of threonine to tRNA(Thr) in a two-step reaction: L-threonine is first activated by ATP to form Thr-AMP and then transferred to the acceptor end of tRNA(Thr). Also edits incorrectly charged L-seryl-tRNA(Thr). The sequence is that of Threonine--tRNA ligase from Stenotrophomonas maltophilia (strain R551-3).